The following is a 108-amino-acid chain: uncharacterized protein (108 aa).

Residues 1 to 12 show a composition bias toward polar residues; the sequence is MSNQQKQLQLPS. The interval 1 to 22 is disordered; the sequence is MSNQQKQLQLPSASIKKPKEKQ.

This is an uncharacterized protein from Dictyostelium discoideum (Social amoeba).